Reading from the N-terminus, the 488-residue chain is Microtubule-destabilizing protein 60 (488 aa).

Polar residues predominate over residues 25 to 56 (AQEVSRFSENSNPNFVSHSTPLEKSSKSSAQK). Disordered regions lie at residues 25-71 (AQEV…VFSP), 262-304 (HASV…TKKQ), and 436-457 (DRPFIPKRSNKHPTVPRDPKFN). A compositionally biased stretch (low complexity) spans 264–280 (SVSSSWDNSVSSLNSNG).

Belongs to the TPX2 family.

Its subcellular location is the cytoplasm. It is found in the cytoskeleton. In terms of biological role, binds directly to microtubules. Microtubule-destabilizing protein involved in the PIF3-dependent positive regulation of hypocotyl cell elongation via the modulation of cortical microtubules dynamic in response to light and ethylene signaling. Promotes submergence-induced and ethylene-dependent underwater hypocotyl elongation. The polypeptide is Microtubule-destabilizing protein 60 (Arabidopsis thaliana (Mouse-ear cress)).